Here is a 969-residue protein sequence, read N- to C-terminus: Protein translocase subunit SecA (969 aa).

ATP-binding positions include Gln99, 117-121 (GEGKT), and Asp631.

Belongs to the SecA family. Monomer and homodimer. Part of the essential Sec protein translocation apparatus which comprises SecA, SecYEG and auxiliary proteins SecDF. Other proteins may also be involved.

It is found in the cell inner membrane. It localises to the cytoplasm. It catalyses the reaction ATP + H2O + cellular proteinSide 1 = ADP + phosphate + cellular proteinSide 2.. Its function is as follows. Part of the Sec protein translocase complex. Interacts with the SecYEG preprotein conducting channel. Has a central role in coupling the hydrolysis of ATP to the transfer of proteins into and across the cell membrane, serving as an ATP-driven molecular motor driving the stepwise translocation of polypeptide chains across the membrane. In Chlamydia trachomatis serovar D (strain ATCC VR-885 / DSM 19411 / UW-3/Cx), this protein is Protein translocase subunit SecA.